A 266-amino-acid polypeptide reads, in one-letter code: Killer cell lectin-like receptor 6 (266 aa).

At M1–Q44 the chain is on the cytoplasmic side. The chain crosses the membrane as a helical; Signal-anchor for type II membrane protein span at residues L45–V66. The Extracellular portion of the chain corresponds to K67–H266. N87 and N104 each carry an N-linked (GlcNAc...) asparagine glycan. The 119-residue stretch at G143–L261 folds into the C-type lectin domain. Disulfide bonds link C149–C154, C167–C255, C171–C257, and C236–C249.

In terms of assembly, homodimer; disulfide-linked.

The protein resides in the membrane. Receptor on natural killer (NK) cells for class I MHC. This is Killer cell lectin-like receptor 6 (Klra6) from Mus musculus (Mouse).